Reading from the N-terminus, the 229-residue chain is PKHD-type hydroxylase OCAR_6723/OCA5_c13470 (229 aa).

Residues 78–180 (HIFPPLFNRY…RVASFFWLQS (103 aa)) form the Fe2OG dioxygenase domain. Fe cation contacts are provided by histidine 98, aspartate 100, and histidine 161. Arginine 171 lines the 2-oxoglutarate pocket.

It depends on Fe(2+) as a cofactor. L-ascorbate is required as a cofactor.

The protein is PKHD-type hydroxylase OCAR_6723/OCA5_c13470 of Afipia carboxidovorans (strain ATCC 49405 / DSM 1227 / KCTC 32145 / OM5) (Oligotropha carboxidovorans).